A 105-amino-acid polypeptide reads, in one-letter code: Saimiri transformation-associated protein (105 aa).

Residues 1 to 75 (MASEPNLRYP…GPPGPSGLPG (75 aa)) are Cytoplasmic-facing. Residues 1–75 (MASEPNLRYP…GPPGPSGLPG (75 aa)) form a disordered region. Residues 15-74 (GDRGPQGPPGPPGPQGPPGPQGPPGPQGPPGPQGPPGPQGPPGPQGPPGPPGPPGPSGLP) enclose the Collagen-like domain. Pro residues predominate over residues 20 to 71 (QGPPGPPGPQGPPGPQGPPGPQGPPGPQGPPGPQGPPGPQGPPGPPGPPGPS). A helical transmembrane segment spans residues 76–96 (LFVTNLLLGIIILLLLIIVAI). The Extracellular segment spans residues 97-105 (LLVSKLVVN).

In terms of assembly, binds to host RAS and TRAF2.

Its subcellular location is the host membrane. Functionally, acts synergistically with Tip to stimulate NF-kappa-B activity and interleukin-2 gene expression by binding to host TRAF proteins. Activation of NF-kappa-B protects lymphocytes from apoptosis, thereby facilitating viral induced cell transformation. This Saimiriine herpesvirus 2 (strain 484-77) (SaHV-2) protein is Saimiri transformation-associated protein.